A 360-amino-acid chain; its full sequence is UDP-D-xylose:L-fucose alpha-1,3-D-xylosyltransferase MGP4 (360 aa).

The disordered stretch occupies residues 1-25 (MAQQKFLHQRPIQNPFTNPFSSSPL). The Cytoplasmic portion of the chain corresponds to 1–41 (MAQQKFLHQRPIQNPFTNPFSSSPLSTSSISNRPISLLSRN). Residues 14 to 25 (NPFTNPFSSSPL) are compositionally biased toward low complexity. A helical; Signal-anchor for type II membrane protein membrane pass occupies residues 42–62 (GLLLLLALLVILGVFLPWAGS). At 63–360 (PLFPSPNKLS…ASESPLGKLE (298 aa)) the chain is on the lumenal side. Residues N93 and N168 are each glycosylated (N-linked (GlcNAc...) asparagine). The DXD motif signature appears at 191 to 193 (DVD). 2 N-linked (GlcNAc...) asparagine glycosylation sites follow: N285 and N310.

The protein belongs to the glycosyltransferase 77 family. Mn(2+) serves as cofactor. Requires Mg(2+) as cofactor. In terms of tissue distribution, widely expressed.

The protein resides in the golgi apparatus membrane. Catalyzes the transfer of D-xylose from UDP-alpha-D-xylose onto L-fucose. Probably involved in the biosynthesis of rhamnogalacturonan II (RG-II) through xylosylation of the internal fucose moiety of the A-chain of RG-II, a structurally complex pectic polysaccharide of the primary cell wall. RG-II is essential for the cell wall integrity of rapidly growing tissues such as roots and pollen tube growth and elongation. The sequence is that of UDP-D-xylose:L-fucose alpha-1,3-D-xylosyltransferase MGP4 from Arabidopsis thaliana (Mouse-ear cress).